A 329-amino-acid polypeptide reads, in one-letter code: Sideroflexin-1.1 (329 aa).

Helical transmembrane passes span 100 to 122, 150 to 167, 178 to 198, 232 to 254, and 274 to 294; these read MPGN…GVVF, LFVS…VALG, LAAR…NIPM, VTLS…MNRI, and IQTL…CALF.

This sequence belongs to the sideroflexin family.

Its subcellular location is the mitochondrion inner membrane. The enzyme catalyses L-serine(in) = L-serine(out). It catalyses the reaction L-alanine(in) = L-alanine(out). It carries out the reaction L-cysteine(in) = L-cysteine(out). Functionally, amino acid transporter importing serine, an essential substrate of the mitochondrial branch of the one-carbon pathway, into mitochondria. Mitochondrial serine is then converted to glycine and formate, which exits to the cytosol where it is used to generate the charged folates that serve as one-carbon donors. May also transport other amino acids including alanine and cysteine. This chain is Sideroflexin-1.1, found in Caenorhabditis elegans.